We begin with the raw amino-acid sequence, 713 residues long: Probable glutamate carboxypeptidase VP8 (713 aa).

Residues 1-10 (MPHSVLARLP) are Cytoplasmic-facing. Residues 11-31 (PGSVRLVAAFGLLLLVSLLVL) traverse the membrane as a helical; Signal-anchor for type II membrane protein segment. The Extracellular segment spans residues 32–713 (HRRPGRPHVA…PTNFSSLVTP (682 aa)). Residues Asn66 and Asn311 are each glycosylated (N-linked (GlcNAc...) asparagine). A catalytic region spans residues 245 to 539 (ATSGAERLKF…EIWGLLALRL (295 aa)). Positions 345 and 355 each coordinate Zn(2+). Residue Glu392 is the Nucleophile of the active site. Zn(2+)-binding residues include Glu393, Asp421, and His505. 2 N-linked (GlcNAc...) asparagine glycosylation sites follow: Asn667 and Asn706.

Belongs to the peptidase M28 family. M28B subfamily. Requires Zn(2+) as cofactor.

It localises to the cell membrane. The enzyme catalyses Release of an unsubstituted, C-terminal glutamyl residue, typically from Ac-Asp-Glu or folylpoly-gamma-glutamates.. In terms of biological role, involved in the regulation of meristem development and seed maturation processes. Mediates regulation of embryonic regulatory genes and genes controlling abscisic acid (ABA) biosynthesis and turnover in developing seeds. May be required for the synthesis of small signaling molecules that integrates meristem and embryo formation in seeds. In Zea mays (Maize), this protein is Probable glutamate carboxypeptidase VP8.